The sequence spans 37 residues: Large ribosomal subunit protein bL36 (37 aa).

Belongs to the bacterial ribosomal protein bL36 family.

In Mycoplasma sp, this protein is Large ribosomal subunit protein bL36 (rpmJ).